A 343-amino-acid polypeptide reads, in one-letter code: Anthranilate phosphoribosyltransferase (343 aa).

Residues G84, 87 to 88 (GD), T92, 94 to 97 (NIST), 112 to 120 (KHGNRGVSS), and S124 contribute to the 5-phospho-alpha-D-ribose 1-diphosphate site. G84 contributes to the anthranilate binding site. S96 provides a ligand contact to Mg(2+). N115 is a binding site for anthranilate. Residue R170 coordinates anthranilate. Residues D229 and E230 each contribute to the Mg(2+) site.

It belongs to the anthranilate phosphoribosyltransferase family. As to quaternary structure, homodimer. It depends on Mg(2+) as a cofactor.

It catalyses the reaction N-(5-phospho-beta-D-ribosyl)anthranilate + diphosphate = 5-phospho-alpha-D-ribose 1-diphosphate + anthranilate. The protein operates within amino-acid biosynthesis; L-tryptophan biosynthesis; L-tryptophan from chorismate: step 2/5. Its function is as follows. Catalyzes the transfer of the phosphoribosyl group of 5-phosphorylribose-1-pyrophosphate (PRPP) to anthranilate to yield N-(5'-phosphoribosyl)-anthranilate (PRA). This Burkholderia vietnamiensis (strain G4 / LMG 22486) (Burkholderia cepacia (strain R1808)) protein is Anthranilate phosphoribosyltransferase.